A 545-amino-acid polypeptide reads, in one-letter code: Capsular polysaccharide phosphotransferase SacB (545 aa).

This sequence belongs to the stealth family.

May be the polymerase that links individual UDP-N-acetyl-D-mannosamine monomers. In serotype A the capsule is composed of repeated units of (alpha 1-6)-linked N-acetyl-D-mannosamine-1-phosphate. In Neisseria meningitidis serogroup A, this protein is Capsular polysaccharide phosphotransferase SacB (sacB).